A 581-amino-acid chain; its full sequence is Prolactin receptor (581 aa).

Residues M1–G24 form the signal peptide. Topologically, residues Q25–M237 are extracellular. Fibronectin type-III domains lie at P27–P127 and P129–D229. A disulfide bond links C36 and C46. The N-linked (GlcNAc...) asparagine glycan is linked to N59. Residues C75 and C86 are joined by a disulfide bond. The N-linked (GlcNAc...) asparagine glycan is linked to N132. Residues D211 and H212 each coordinate Zn(2+). The WSXWS motif motif lies at W215–S219. A helical membrane pass occupies residues W238–L258. Topologically, residues K259–P581 are cytoplasmic. The short motif at I267 to K275 is the Box 1 motif element. 2 disordered regions span residues Q324–E384 and D458–Q499. Basic and acidic residues-rich tracts occupy residues P329–S349, H375–E384, and E469–E483.

The protein belongs to the type I cytokine receptor family. Type 1 subfamily. Interacts with SMARCA1. Interacts with NEK3 and VAV2 and this interaction is prolactin-dependent. Expressed in all tissues examined; liver, peripheral blood lymphocytes, endometrium, corpus luteum, intestine, fetal thymus, fetal spleen, fetal liver and fetal brain.

The protein localises to the membrane. This is a receptor for the anterior pituitary hormone prolactin. The chain is Prolactin receptor (PRLR) from Bos taurus (Bovine).